The following is a 546-amino-acid chain: Membrane protein insertase YidC (546 aa).

A helical membrane pass occupies residues 6-26; the sequence is LILFIVFSFSLLLLWEAWQDK. Residues 31–56 are disordered; the sequence is PATRPVAGAPAGSAAPTPSTALNAPA. The span at 37-56 shows a compositional bias: low complexity; sequence AGAPAGSAAPTPSTALNAPA. The next 4 membrane-spanning stretches (helical) occupy residues 351 to 371, 425 to 445, 465 to 482, and 494 to 514; these read LVGN…LALY, LPIL…LAAV, WYIL…QVKL, and IMMI…AGLV.

The protein belongs to the OXA1/ALB3/YidC family. Type 1 subfamily. Interacts with the Sec translocase complex via SecD. Specifically interacts with transmembrane segments of nascent integral membrane proteins during membrane integration.

It is found in the cell inner membrane. Its function is as follows. Required for the insertion and/or proper folding and/or complex formation of integral membrane proteins into the membrane. Involved in integration of membrane proteins that insert both dependently and independently of the Sec translocase complex, as well as at least some lipoproteins. Aids folding of multispanning membrane proteins. In Thiobacillus denitrificans (strain ATCC 25259 / T1), this protein is Membrane protein insertase YidC.